A 444-amino-acid polypeptide reads, in one-letter code: 23S rRNA (uracil(1939)-C(5))-methyltransferase RlmD (444 aa).

A TRAM domain is found at 5–67 (RNRLDRTPFQ…RHFDEAKTVE (63 aa)). Cys80, Cys86, Cys89, and Cys168 together coordinate [4Fe-4S] cluster. The S-adenosyl-L-methionine site is built by Gln276, Phe305, Asn310, Glu326, Asp353, and Asp374. Cys400 serves as the catalytic Nucleophile.

It belongs to the class I-like SAM-binding methyltransferase superfamily. RNA M5U methyltransferase family. RlmD subfamily.

It carries out the reaction uridine(1939) in 23S rRNA + S-adenosyl-L-methionine = 5-methyluridine(1939) in 23S rRNA + S-adenosyl-L-homocysteine + H(+). Its function is as follows. Catalyzes the formation of 5-methyl-uridine at position 1939 (m5U1939) in 23S rRNA. In Xanthomonas euvesicatoria pv. vesicatoria (strain 85-10) (Xanthomonas campestris pv. vesicatoria), this protein is 23S rRNA (uracil(1939)-C(5))-methyltransferase RlmD.